The following is a 431-amino-acid chain: tRNA(Ile)-lysidine synthase (431 aa).

19–24 provides a ligand contact to ATP; the sequence is STGIDS.

It belongs to the tRNA(Ile)-lysidine synthase family.

The protein resides in the cytoplasm. The catalysed reaction is cytidine(34) in tRNA(Ile2) + L-lysine + ATP = lysidine(34) in tRNA(Ile2) + AMP + diphosphate + H(+). Functionally, ligates lysine onto the cytidine present at position 34 of the AUA codon-specific tRNA(Ile) that contains the anticodon CAU, in an ATP-dependent manner. Cytidine is converted to lysidine, thus changing the amino acid specificity of the tRNA from methionine to isoleucine. In Staphylococcus aureus (strain Mu50 / ATCC 700699), this protein is tRNA(Ile)-lysidine synthase.